The primary structure comprises 155 residues: Ribosomal RNA large subunit methyltransferase H (155 aa).

S-adenosyl-L-methionine is bound by residues L73, G104, and 123–128; that span reads LSPLTL.

It belongs to the RNA methyltransferase RlmH family. In terms of assembly, homodimer.

The protein resides in the cytoplasm. It catalyses the reaction pseudouridine(1915) in 23S rRNA + S-adenosyl-L-methionine = N(3)-methylpseudouridine(1915) in 23S rRNA + S-adenosyl-L-homocysteine + H(+). Specifically methylates the pseudouridine at position 1915 (m3Psi1915) in 23S rRNA. This Pseudomonas aeruginosa (strain UCBPP-PA14) protein is Ribosomal RNA large subunit methyltransferase H.